Reading from the N-terminus, the 165-residue chain is NADPH-dependent 7-cyano-7-deazaguanine reductase (165 aa).

The active-site Thioimide intermediate is the cysteine 56. Aspartate 63 functions as the Proton donor in the catalytic mechanism. Residues 78–80 (VES) and 97–98 (HE) each bind substrate.

Belongs to the GTP cyclohydrolase I family. QueF type 1 subfamily.

The protein resides in the cytoplasm. It catalyses the reaction 7-aminomethyl-7-carbaguanine + 2 NADP(+) = 7-cyano-7-deazaguanine + 2 NADPH + 3 H(+). The protein operates within tRNA modification; tRNA-queuosine biosynthesis. With respect to regulation, is totally inhibited by 4-aminobenzylcyanide in vitro. Catalyzes the NADPH-dependent reduction of 7-cyano-7-deazaguanine (preQ0) to 7-aminomethyl-7-deazaguanine (preQ1), a late step in the queuosine pathway. Is highly specific for its natural substrate preQ0, since it cannot use various aliphatic, aromatic and heterocyclic nitriles, although it can reduce the substrate analog 5-cyanopyrrolo[2,3-d]pyrimidin-4-one with lesser efficiency. The chain is NADPH-dependent 7-cyano-7-deazaguanine reductase from Geobacillus kaustophilus (strain HTA426).